Consider the following 160-residue polypeptide: MKNIVDDKILLTQQKLEEIEKELEHLINVERVNVIQEIKDARSQGDLSENAEYDVAREKQGIIESRIRELETIISKAKIIKADLGSSRVSIGSKVSLENVESGEIQTFQIVSSIDADPFKSKISNFSPIAQALLGQHQGDEVEVDVNEKYSVRILEVINE.

Positions 3 to 84 (NIVDDKILLT…SKAKIIKADL (82 aa)) form a coiled coil.

The protein belongs to the GreA/GreB family.

Its function is as follows. Necessary for efficient RNA polymerase transcription elongation past template-encoded arresting sites. The arresting sites in DNA have the property of trapping a certain fraction of elongating RNA polymerases that pass through, resulting in locked ternary complexes. Cleavage of the nascent transcript by cleavage factors such as GreA or GreB allows the resumption of elongation from the new 3'terminus. GreA releases sequences of 2 to 3 nucleotides. This Mesomycoplasma hyopneumoniae (strain J / ATCC 25934 / NCTC 10110) (Mycoplasma hyopneumoniae) protein is Transcription elongation factor GreA.